The chain runs to 644 residues: Protein DA1-related 6 (644 aa).

UIM domains follow at residues 119-138, 181-200, and 244-263; these read EEDE…NNRR, DVDE…KGKG, and DEDE…KGQI. The LIM zinc-binding domain occupies 284-355; sequence SLCGGCNFAV…YVCKEKKMKT (72 aa). Residues 572–589 are compositionally biased toward low complexity; sequence ASSSASSSSRTPPAASAS. The tract at residues 572–591 is disordered; sequence ASSSASSSSRTPPAASASKK.

In terms of assembly, interacts with ubiquitin.

Ubiquitin receptor that probably regulates developmental process. The protein is Protein DA1-related 6 (DAR6) of Arabidopsis thaliana (Mouse-ear cress).